The following is an 884-amino-acid chain: Telomerase reverse transcriptase (884 aa).

The Reverse transcriptase domain occupies 422 to 725; the sequence is CRNHNSYTLS…TVIQFCAMHI (304 aa). Residues D530, D670, and D671 each coordinate Mg(2+).

It belongs to the reverse transcriptase family. Telomerase subfamily. Catalytic subunit of the telomerase holoenzyme complex composed minimally of EST2 and the telomerase RNA template component.

The protein resides in the nucleus. It localises to the chromosome. The protein localises to the telomere. It carries out the reaction DNA(n) + a 2'-deoxyribonucleoside 5'-triphosphate = DNA(n+1) + diphosphate. Its function is as follows. Telomerase is a ribonucleoprotein enzyme essential for the replication of chromosome termini in most eukaryotes. It elongates telomeres. It is a reverse transcriptase that adds simple sequence repeats to chromosome ends by copying a template sequence within the RNA component of the enzyme. This chain is Telomerase reverse transcriptase (EST2), found in Saccharomyces cerevisiae (strain ATCC 204508 / S288c) (Baker's yeast).